The following is a 123-amino-acid chain: Small ribosomal subunit protein uS8 (123 aa).

This sequence belongs to the universal ribosomal protein uS8 family. Part of the 30S ribosomal subunit. Contacts proteins S5 and S12.

Its function is as follows. One of the primary rRNA binding proteins, it binds directly to 16S rRNA central domain where it helps coordinate assembly of the platform of the 30S subunit. The protein is Small ribosomal subunit protein uS8 (rpsH) of Carsonella ruddii (strain PV).